The sequence spans 142 residues: Large ribosomal subunit protein uL11 (142 aa).

This sequence belongs to the universal ribosomal protein uL11 family. Part of the ribosomal stalk of the 50S ribosomal subunit. Interacts with L10 and the large rRNA to form the base of the stalk. L10 forms an elongated spine to which L12 dimers bind in a sequential fashion forming a multimeric L10(L12)X complex. Post-translationally, one or more lysine residues are methylated.

In terms of biological role, forms part of the ribosomal stalk which helps the ribosome interact with GTP-bound translation factors. The polypeptide is Large ribosomal subunit protein uL11 (Klebsiella pneumoniae subsp. pneumoniae (strain ATCC 700721 / MGH 78578)).